A 553-amino-acid chain; its full sequence is MASRSSTRIPAPLMLTIWIALALGCVRLTSSLDGRPLAAAGIVVTGDKAVNIYTSSQTGSIIIKLLPNMPKDKEACAKAPLEAYNRTLTTLLTPLGDSIRRIQESVTTSGGRRQRRFIGAIIGSVALGVATAAQITAASALIQANQNAANILRLKESIAATNEAVHEVTDGLSQLAVAVGKMQQFVNDQFNNTTQELDCIKITHEVGVELNLYLTELTTVFGPQITSPALNQLTIQALYNLAGGNMDYLLTKLGLGNNQLSSLIGSGLITGNPILYDSQTQLLGIQVTLPSVGNLNNMRATYLETSSVSTTKGFASALVPKVVTQVGSVIEELDTSYCIETDLDLYCTRIVTFPMSPGIYSCLTGNTSACMYSKTEGALTTPYMTLKGSVIANCKMTTCRCADPPGIISQNYGEAVSLIDRHSCNVLSLDGITLRLSGEFDAAYQKNVSILNSQVIVTGNLDISTELGNANNSISNALNKLEESNSKLDKVNVRLTNTSALITYIVLTVISLVCGILSLVLACYLMHKQKAQQKTLLWLGNNTLDQMRATTKA.

The first 31 residues, 1–31 (MASRSSTRIPAPLMLTIWIALALGCVRLTSS), serve as a signal peptide directing secretion. Topologically, residues 32 to 500 (LDGRPLAAAG…VNVRLTNTSA (469 aa)) are extracellular. 5 disulfide bridges follow: Cys-76–Cys-199, Cys-338–Cys-347, Cys-362–Cys-370, Cys-394–Cys-399, and Cys-401–Cys-424. Asn-85 is a glycosylation site (N-linked (GlcNAc...) asparagine; by host). Residues 117–141 (FIGAIIGSVALGVATAAQITAASAL) are fusion peptide. Positions 142-170 (IQANQNAANILRLKESIAATNEAVHEVTD) form a coiled coil. N-linked (GlcNAc...) asparagine; by host glycans are attached at residues Asn-191 and Asn-192. Asn-366 carries N-linked (GlcNAc...) asparagine; by host glycosylation. N-linked (GlcNAc...) asparagine; by host glycosylation is found at Asn-447 and Asn-471. Residues 466–491 (ELGNANNSISNALNKLEESNSKLDKV) adopt a coiled-coil conformation. The chain crosses the membrane as a helical span at residues 501-521 (LITYIVLTVISLVCGILSLVL). The Cytoplasmic portion of the chain corresponds to 522-553 (ACYLMHKQKAQQKTLLWLGNNTLDQMRATTKA). Residue Cys-523 is the site of S-palmitoyl cysteine; by host attachment.

It belongs to the paramyxoviruses fusion glycoprotein family. Homotrimer of disulfide-linked F1-F2. In terms of processing, the inactive precursor F0 is glycosylated and proteolytically cleaved into F1 and F2 to be functionally active. The cleavage is mediated by cellular proteases during the transport and maturation of the polypeptide.

It localises to the virion membrane. The protein localises to the host cell membrane. In terms of biological role, class I viral fusion protein. Under the current model, the protein has at least 3 conformational states: pre-fusion native state, pre-hairpin intermediate state, and post-fusion hairpin state. During viral and plasma cell membrane fusion, the heptad repeat (HR) regions assume a trimer-of-hairpins structure, positioning the fusion peptide in close proximity to the C-terminal region of the ectodomain. The formation of this structure appears to drive apposition and subsequent fusion of viral and plasma cell membranes. Directs fusion of viral and cellular membranes leading to delivery of the nucleocapsid into the cytoplasm. This fusion is pH independent and occurs directly at the outer cell membrane. The trimer of F1-F2 (F protein) probably interacts with HN at the virion surface. Upon HN binding to its cellular receptor, the hydrophobic fusion peptide is unmasked and interacts with the cellular membrane, inducing the fusion between cell and virion membranes. Later in infection, F proteins expressed at the plasma membrane of infected cells could mediate fusion with adjacent cells to form syncytia, a cytopathic effect that could lead to tissue necrosis. The chain is Fusion glycoprotein F0 (F) from Gallus gallus (Chicken).